A 517-amino-acid polypeptide reads, in one-letter code: Bifunctional purine biosynthesis protein PurH (517 aa).

The MGS-like domain maps to 1–145; that stretch reads MSPLALVSVS…KNHADVAVLV (145 aa).

It belongs to the PurH family.

The enzyme catalyses (6R)-10-formyltetrahydrofolate + 5-amino-1-(5-phospho-beta-D-ribosyl)imidazole-4-carboxamide = 5-formamido-1-(5-phospho-D-ribosyl)imidazole-4-carboxamide + (6S)-5,6,7,8-tetrahydrofolate. It carries out the reaction IMP + H2O = 5-formamido-1-(5-phospho-D-ribosyl)imidazole-4-carboxamide. It functions in the pathway purine metabolism; IMP biosynthesis via de novo pathway; 5-formamido-1-(5-phospho-D-ribosyl)imidazole-4-carboxamide from 5-amino-1-(5-phospho-D-ribosyl)imidazole-4-carboxamide (10-formyl THF route): step 1/1. The protein operates within purine metabolism; IMP biosynthesis via de novo pathway; IMP from 5-formamido-1-(5-phospho-D-ribosyl)imidazole-4-carboxamide: step 1/1. The polypeptide is Bifunctional purine biosynthesis protein PurH (Prochlorococcus marinus (strain MIT 9515)).